The sequence spans 333 residues: Threonine-phosphate decarboxylase (333 aa).

K199 carries the post-translational modification N6-(pyridoxal phosphate)lysine.

It belongs to the class-I pyridoxal-phosphate-dependent aminotransferase family. Homodimer. Pyridoxal 5'-phosphate serves as cofactor.

The protein resides in the cytoplasm. It carries out the reaction O-phospho-L-threonine + H(+) = (R)-1-aminopropan-2-yl phosphate + CO2. Its pathway is cofactor biosynthesis; adenosylcobalamin biosynthesis. Functionally, decarboxylates L-threonine-O-3-phosphate to yield (R)-1-amino-2-propanol O-2-phosphate, the precursor for the linkage between the nucleotide loop and the corrin ring in cobalamin. This Sinorhizobium sp protein is Threonine-phosphate decarboxylase (cobC).